The chain runs to 306 residues: Aspartate carbamoyltransferase catalytic subunit (306 aa).

The carbamoyl phosphate site is built by R55 and T56. K84 contacts L-aspartate. The carbamoyl phosphate site is built by R105, H133, and Q136. L-aspartate is bound by residues R166 and R227. L265 and P266 together coordinate carbamoyl phosphate.

The protein belongs to the aspartate/ornithine carbamoyltransferase superfamily. ATCase family. Heterododecamer (2C3:3R2) of six catalytic PyrB chains organized as two trimers (C3), and six regulatory PyrI chains organized as three dimers (R2).

The enzyme catalyses carbamoyl phosphate + L-aspartate = N-carbamoyl-L-aspartate + phosphate + H(+). It participates in pyrimidine metabolism; UMP biosynthesis via de novo pathway; (S)-dihydroorotate from bicarbonate: step 2/3. Functionally, catalyzes the condensation of carbamoyl phosphate and aspartate to form carbamoyl aspartate and inorganic phosphate, the committed step in the de novo pyrimidine nucleotide biosynthesis pathway. This is Aspartate carbamoyltransferase catalytic subunit from Neisseria meningitidis serogroup C (strain 053442).